A 456-amino-acid chain; its full sequence is Acid sphingomyelinase-like phosphodiesterase 3b (456 aa).

Residues 1 to 18 (MTLLGWLIFLAPWGVAGA) form the signal peptide. Zn(2+) contacts are provided by aspartate 28 and histidine 30. N-linked (GlcNAc...) asparagine glycosylation occurs at asparagine 34. Cysteine 45 and cysteine 64 are joined by a disulfide. N-linked (GlcNAc...) asparagine glycosylation occurs at asparagine 72. Zn(2+) is bound at residue aspartate 93. Asparagine 100 carries N-linked (GlcNAc...) asparagine glycosylation. Asparagine 134 provides a ligand contact to Zn(2+). N-linked (GlcNAc...) asparagine glycans are attached at residues asparagine 164 and asparagine 223. Zn(2+) is bound by residues histidine 236, histidine 277, and histidine 279. Disulfide bonds link cysteine 405/cysteine 409 and cysteine 415/cysteine 428.

Belongs to the acid sphingomyelinase family. Interacts with TLR4, TLR7, TLR8 and TLR9. Requires Zn(2+) as cofactor. Post-translationally, N-glycosylated. In terms of tissue distribution, macrophages and dendritic cells.

Its subcellular location is the secreted. It is found in the cell membrane. Its function is as follows. Lipid-modulating phosphodiesterase. Active on the surface of macrophages and dendritic cells and strongly influences macrophage lipid composition and membrane fluidity. Acts as a negative regulator of Toll-like receptor signaling. Has in vitro phosphodiesterase activity, but the physiological substrate is unknown. Lacks activity with phosphocholine-containing lipids, but can cleave CDP-choline, and can release phosphate from ATP and ADP (in vitro). The sequence is that of Acid sphingomyelinase-like phosphodiesterase 3b (Smpdl3b) from Mus musculus (Mouse).